The chain runs to 243 residues: Proteasome subunit beta (243 aa).

Composition is skewed to basic and acidic residues over residues 1–11 (MRTPTHDEFSG) and 33–47 (NADR…KETK). Residues 1 to 49 (MRTPTHDEFSGRLDSLNGDRSNVFGPELGEFSNADRRADELGDKETKTG) constitute a propeptide, removed in mature form; by autocatalysis. Residues 1–50 (MRTPTHDEFSGRLDSLNGDRSNVFGPELGEFSNADRRADELGDKETKTGT) form a disordered region. Thr-50 (nucleophile) is an active-site residue. Ser-129 bears the Phosphoserine mark.

The protein belongs to the peptidase T1B family. The 20S proteasome core is composed of 14 alpha and 14 beta subunits that assemble into four stacked heptameric rings, resulting in a barrel-shaped structure. The two inner rings, each composed of seven catalytic beta subunits, are sandwiched by two outer rings, each composed of seven alpha subunits. H.volcanii produces at least 2 types of 20S proteasomes: an alpha1-beta proteasome and a proteasome containing all three subunits (alpha1, alpha2, and beta) that appears to be asymmetrical with homo-oligomeric alpha1 and alpha2 rings positioned on separate ends. The catalytic chamber with the active sites is on the inside of the barrel. Has probably a gated structure, the ends of the cylinder being occluded by the N-termini of the alpha-subunits. Is likely capped at one or both ends by the proteasome regulatory ATPase, PAN.

It localises to the cytoplasm. It catalyses the reaction Cleavage of peptide bonds with very broad specificity.. The formation of the proteasomal ATPase PAN-20S proteasome complex, via the docking of the C-termini of PAN into the intersubunit pockets in the alpha-rings, triggers opening of the gate for substrate entry. Interconversion between the open-gate and close-gate conformations leads to a dynamic regulation of the 20S proteasome proteolysis activity. In vitro, the chymotrypsin-like activity of the alpha1-beta proteasome is potently inhibited by carbobenzoxyl-leucinyl-leucinyl-leucinal-H (MG132) and significantly by N-acetyl-leucinyl-leucinyl-norleucinal-H (calpain inhibitor I). Functionally, component of the proteasome core, a large protease complex with broad specificity involved in protein degradation. The H.volcanii alpha1-beta proteasome is able to cleave oligopeptides after Phe, Tyr and Trp, poorly after Glu but not after Arg. Thus, displays chymotrypsin-like activity, low caspase-like activity but no trypsin-like activity. The polypeptide is Proteasome subunit beta (Haloferax volcanii (strain ATCC 29605 / DSM 3757 / JCM 8879 / NBRC 14742 / NCIMB 2012 / VKM B-1768 / DS2) (Halobacterium volcanii)).